Consider the following 417-residue polypeptide: Queuine tRNA-ribosyltransferase accessory subunit 2 (417 aa).

Zn(2+) contacts are provided by Cys-324, Cys-326, Cys-329, and His-355.

Belongs to the queuine tRNA-ribosyltransferase family. QTRT2 subfamily. As to quaternary structure, heterodimer of a catalytic subunit and an accessory subunit. Zn(2+) is required as a cofactor.

It localises to the cytoplasm. Functionally, non-catalytic subunit of the queuine tRNA-ribosyltransferase (TGT) that catalyzes the base-exchange of a guanine (G) residue with queuine (Q) at position 34 (anticodon wobble position) in tRNAs with GU(N) anticodons (tRNA-Asp, -Asn, -His and -Tyr), resulting in the hypermodified nucleoside queuosine (7-(((4,5-cis-dihydroxy-2-cyclopenten-1-yl)amino)methyl)-7-deazaguanosine). In Drosophila virilis (Fruit fly), this protein is Queuine tRNA-ribosyltransferase accessory subunit 2.